The following is a 691-amino-acid chain: Elongation factor G (691 aa).

The tr-type G domain maps to 8–282 (ERVRNIGIAA…AVVDYLPAPV (275 aa)). Residues 17–24 (AHIDAGKT), 81–85 (DTPGH), and 135–138 (NKMD) each bind GTP.

Belongs to the TRAFAC class translation factor GTPase superfamily. Classic translation factor GTPase family. EF-G/EF-2 subfamily.

The protein localises to the cytoplasm. Functionally, catalyzes the GTP-dependent ribosomal translocation step during translation elongation. During this step, the ribosome changes from the pre-translocational (PRE) to the post-translocational (POST) state as the newly formed A-site-bound peptidyl-tRNA and P-site-bound deacylated tRNA move to the P and E sites, respectively. Catalyzes the coordinated movement of the two tRNA molecules, the mRNA and conformational changes in the ribosome. The polypeptide is Elongation factor G (Prochlorococcus marinus (strain MIT 9303)).